The following is an 850-amino-acid chain: Mitogen-activated protein kinase kinase kinase 11 (850 aa).

Ser-11 carries the phosphoserine modification. Positions 18-31 (GSGSGGGGGSGGVR) are enriched in gly residues. Residues 18-37 (GSGSGGGGGSGGVRPEGSPK) are disordered. At Ser-35 the chain carries Phosphoserine. The region spanning 42–106 (YANPVWTALF…PSNYVSRGGG (65 aa)) is the SH3 domain. The region spanning 118–380 (LRLEEVIGIG…ASILQQLEAL (263 aa)) is the Protein kinase domain. ATP is bound by residues 124–132 (IGIGGFGKV) and Lys-145. The active-site Proton acceptor is the Asp-242. Thr-278 is subject to Phosphothreonine; by autocatalysis. A Phosphoserine; by autocatalysis and MAP4K1 modification is found at Ser-282. Residue Ser-395 is modified to Phosphoserine. 2 leucine-zipper regions span residues 404-425 (IQGL…EEEL) and 439-460 (LRRR…ELTL). Residues Ser-508, Ser-525, Ser-549, Ser-556, and Ser-557 each carry the phosphoserine modification. The disordered stretch occupies residues 536-850 (LEPAESGQTW…QAPWAPEAGP (315 aa)). Residues 551 to 563 (RRLDDSSNGERRA) show a composition bias toward basic and acidic residues. Positions 598 to 610 (SSPLGSPSTPPAL) are enriched in low complexity. Residue Ser-655 is modified to Phosphoserine. Pro residues predominate over residues 677–693 (TAPPPAQMASPCPPDLP). At Thr-712 the chain carries Phosphothreonine. Phosphoserine is present on residues Ser-728, Ser-731, Ser-743, Ser-751, Ser-761, Ser-773, Ser-792, Ser-796, and Ser-818. A compositionally biased stretch (pro residues) spans 790-802 (RPSPLPSPQPAPR). Low complexity predominate over residues 803 to 819 (RAPWTLFPDSDPFWDSP).

Belongs to the protein kinase superfamily. STE Ser/Thr protein kinase family. MAP kinase kinase kinase subfamily. As to quaternary structure, homodimer; undergoes dimerization during activation. Interacts with MAP2K4/MKK4. Interacts with MAP2K7/MKK7. Found in a complex with SH3RF1, RAC1, MAP2K7/MKK7, MAPK8IP1/JIP1 and MAPK8/JNK1. The cofactor is Mg(2+). In terms of processing, autophosphorylation on serine and threonine residues within the activation loop plays a role in enzyme activation. Thr-278 is likely to be the main autophosphorylation site. Phosphorylation of Ser-556 and Ser-557 is induced by CDC42.

It localises to the cytoplasm. The protein resides in the cytoskeleton. Its subcellular location is the microtubule organizing center. It is found in the centrosome. It catalyses the reaction L-seryl-[protein] + ATP = O-phospho-L-seryl-[protein] + ADP + H(+). The enzyme catalyses L-threonyl-[protein] + ATP = O-phospho-L-threonyl-[protein] + ADP + H(+). Its activity is regulated as follows. Homodimerization via the leucine zipper domains is required for autophosphorylation and subsequent activation. In terms of biological role, activates the JUN N-terminal pathway. Required for serum-stimulated cell proliferation and for mitogen and cytokine activation of MAPK14 (p38), MAPK3 (ERK) and MAPK8 (JNK1) through phosphorylation and activation of MAP2K4/MKK4 and MAP2K7/MKK7. Plays a role in mitogen-stimulated phosphorylation and activation of BRAF, but does not phosphorylate BRAF directly. Influences microtubule organization during the cell cycle. This chain is Mitogen-activated protein kinase kinase kinase 11 (Map3k11), found in Rattus norvegicus (Rat).